Here is a 126-residue protein sequence, read N- to C-terminus: Aspartate 1-decarboxylase (126 aa).

Serine 25 serves as the catalytic Schiff-base intermediate with substrate; via pyruvic acid. Serine 25 carries the post-translational modification Pyruvic acid (Ser). Threonine 57 lines the substrate pocket. Tyrosine 58 (proton donor) is an active-site residue. Position 73–75 (73–75 (GGA)) interacts with substrate.

This sequence belongs to the PanD family. Heterooctamer of four alpha and four beta subunits. Pyruvate serves as cofactor. In terms of processing, is synthesized initially as an inactive proenzyme, which is activated by self-cleavage at a specific serine bond to produce a beta-subunit with a hydroxyl group at its C-terminus and an alpha-subunit with a pyruvoyl group at its N-terminus.

The protein resides in the cytoplasm. The enzyme catalyses L-aspartate + H(+) = beta-alanine + CO2. It functions in the pathway cofactor biosynthesis; (R)-pantothenate biosynthesis; beta-alanine from L-aspartate: step 1/1. Catalyzes the pyruvoyl-dependent decarboxylation of aspartate to produce beta-alanine. The protein is Aspartate 1-decarboxylase of Stenotrophomonas maltophilia (strain K279a).